Here is a 183-residue protein sequence, read N- to C-terminus: Isopentenyl-diphosphate Delta-isomerase (183 aa).

The Mn(2+) site is built by His26 and His33. The 139-residue stretch at 31-169 folds into the Nudix hydrolase domain; sequence PLHFAFSCYV…PFAFSPWMVE (139 aa). Cys68 is an active-site residue. Residue Cys68 coordinates Mg(2+). His70 contacts Mn(2+). Position 88 (Glu88) interacts with Mg(2+). Residues Glu118 and Glu120 each coordinate Mn(2+). Glu120 is an active-site residue.

Belongs to the IPP isomerase type 1 family. It depends on Mg(2+) as a cofactor. Requires Mn(2+) as cofactor.

The protein localises to the cytoplasm. The enzyme catalyses isopentenyl diphosphate = dimethylallyl diphosphate. It functions in the pathway isoprenoid biosynthesis; dimethylallyl diphosphate biosynthesis; dimethylallyl diphosphate from isopentenyl diphosphate: step 1/1. Its function is as follows. Catalyzes the 1,3-allylic rearrangement of the homoallylic substrate isopentenyl (IPP) to its highly electrophilic allylic isomer, dimethylallyl diphosphate (DMAPP). The polypeptide is Isopentenyl-diphosphate Delta-isomerase (Corynebacterium diphtheriae (strain ATCC 700971 / NCTC 13129 / Biotype gravis)).